Reading from the N-terminus, the 598-residue chain is Dihydroxy-acid dehydratase, mitochondrial (598 aa).

The N-terminal 18 residues, 1-18 (MMFCKLLRCQNGIASKRA), are a transit peptide targeting the mitochondrion. Cys84 is a binding site for [2Fe-2S] cluster. Asp116 contacts Mg(2+). Cys157 serves as a coordination point for [2Fe-2S] cluster. Residue Asp158 participates in Mg(2+) binding. Residue Cys232 participates in [2Fe-2S] cluster binding. Glu485 lines the Mg(2+) pocket. The active-site Proton acceptor is the Ser511.

It belongs to the IlvD/Edd family. It depends on [2Fe-2S] cluster as a cofactor. The cofactor is Mg(2+).

It is found in the mitochondrion. The catalysed reaction is (2R)-2,3-dihydroxy-3-methylbutanoate = 3-methyl-2-oxobutanoate + H2O. It catalyses the reaction (2R,3R)-2,3-dihydroxy-3-methylpentanoate = (S)-3-methyl-2-oxopentanoate + H2O. The protein operates within amino-acid biosynthesis; L-isoleucine biosynthesis; L-isoleucine from 2-oxobutanoate: step 3/4. Its pathway is amino-acid biosynthesis; L-valine biosynthesis; L-valine from pyruvate: step 3/4. Its function is as follows. Dihydroxyacid dehydratase that catalyzes the third step in the common pathway leading to biosynthesis of branched-chain amino acids. Catalyzes the dehydration of (2R,3R)-2,3-dihydroxy-3-methylpentanoate (2,3-dihydroxy-3-methylvalerate) into 2-oxo-3-methylpentanoate (2-oxo-3-methylvalerate) and of (2R)-2,3-dihydroxy-3-methylbutanoate (2,3-dihydroxyisovalerate) into 2-oxo-3-methylbutanoate (2-oxoisovalerate), the penultimate precursor to L-isoleucine and L-valine, respectively. The polypeptide is Dihydroxy-acid dehydratase, mitochondrial (Schizosaccharomyces pombe (strain 972 / ATCC 24843) (Fission yeast)).